The following is a 230-amino-acid chain: V-type proton ATPase subunit E (230 aa).

Belongs to the V-ATPase E subunit family. V-ATPase is a heteromultimeric enzyme composed of a peripheral catalytic V1 complex (components A to H) attached to an integral membrane V0 proton pore complex (components: a, c, c', c'' and d).

In terms of biological role, subunit of the peripheral V1 complex of vacuolar ATPase essential for assembly or catalytic function. V-ATPase is responsible for acidifying a variety of intracellular compartments in eukaryotic cells. In Citrus unshiu (Satsuma mandarin), this protein is V-type proton ATPase subunit E (VATE).